The sequence spans 220 residues: Protein Syd (220 aa).

This sequence belongs to the Syd family.

The protein resides in the cell inner membrane. Its function is as follows. Interacts with the SecY protein in vivo. May bind preferentially to an uncomplexed state of SecY, thus functioning either as a chelating agent for excess SecY in the cell or as a regulatory factor that negatively controls the translocase function. This Shewanella loihica (strain ATCC BAA-1088 / PV-4) protein is Protein Syd.